The sequence spans 117 residues: Large ribosomal subunit protein bL19 (117 aa).

This sequence belongs to the bacterial ribosomal protein bL19 family.

This protein is located at the 30S-50S ribosomal subunit interface and may play a role in the structure and function of the aminoacyl-tRNA binding site. This Alkalilimnicola ehrlichii (strain ATCC BAA-1101 / DSM 17681 / MLHE-1) protein is Large ribosomal subunit protein bL19.